A 282-amino-acid chain; its full sequence is Pantothenate synthetase (282 aa).

Residue 30–37 (MGFLHDGH) coordinates ATP. The Proton donor role is filled by histidine 37. Position 60 (glutamine 60) interacts with (R)-pantoate. Glutamine 60 contacts beta-alanine. An ATP-binding site is contributed by 146 to 149 (GQKD). Glutamine 152 provides a ligand contact to (R)-pantoate. Residues isoleucine 175 and 183–186 (KSSR) contribute to the ATP site.

The protein belongs to the pantothenate synthetase family. In terms of assembly, homodimer.

It localises to the cytoplasm. The catalysed reaction is (R)-pantoate + beta-alanine + ATP = (R)-pantothenate + AMP + diphosphate + H(+). The protein operates within cofactor biosynthesis; (R)-pantothenate biosynthesis; (R)-pantothenate from (R)-pantoate and beta-alanine: step 1/1. Functionally, catalyzes the condensation of pantoate with beta-alanine in an ATP-dependent reaction via a pantoyl-adenylate intermediate. The protein is Pantothenate synthetase of Campylobacter jejuni subsp. jejuni serotype O:6 (strain 81116 / NCTC 11828).